The sequence spans 239 residues: LexA repressor (239 aa).

Residues 26–46 constitute a DNA-binding region (H-T-H motif); it reads FDEMKDALDLASKSGIHRLIT. Residues serine 159 and lysine 197 each act as for autocatalytic cleavage activity in the active site.

Belongs to the peptidase S24 family. In terms of assembly, homodimer.

It catalyses the reaction Hydrolysis of Ala-|-Gly bond in repressor LexA.. Its function is as follows. Represses a number of genes involved in the response to DNA damage (SOS response), including recA and lexA. In the presence of single-stranded DNA, RecA interacts with LexA causing an autocatalytic cleavage which disrupts the DNA-binding part of LexA, leading to derepression of the SOS regulon and eventually DNA repair. The polypeptide is LexA repressor (Rhizobium etli (strain ATCC 51251 / DSM 11541 / JCM 21823 / NBRC 15573 / CFN 42)).